The sequence spans 179 residues: Pyridoxal 5'-phosphate synthase subunit PdxT (179 aa).

Residue 48 to 50 (GES) participates in L-glutamine binding. Cysteine 79 (nucleophile) is an active-site residue. L-glutamine contacts are provided by residues arginine 101 and 127–128 (IR). Residues histidine 163 and glutamate 165 each act as charge relay system in the active site.

This sequence belongs to the glutaminase PdxT/SNO family. In the presence of PdxS, forms a dodecamer of heterodimers. Only shows activity in the heterodimer.

The enzyme catalyses aldehydo-D-ribose 5-phosphate + D-glyceraldehyde 3-phosphate + L-glutamine = pyridoxal 5'-phosphate + L-glutamate + phosphate + 3 H2O + H(+). The catalysed reaction is L-glutamine + H2O = L-glutamate + NH4(+). Its pathway is cofactor biosynthesis; pyridoxal 5'-phosphate biosynthesis. Its function is as follows. Catalyzes the hydrolysis of glutamine to glutamate and ammonia as part of the biosynthesis of pyridoxal 5'-phosphate. The resulting ammonia molecule is channeled to the active site of PdxS. The sequence is that of Pyridoxal 5'-phosphate synthase subunit PdxT from Francisella philomiragia subsp. philomiragia (strain ATCC 25017 / CCUG 19701 / FSC 153 / O#319-036).